Reading from the N-terminus, the 668-residue chain is Alpha-1,4-glucan:maltose-1-phosphate maltosyltransferase (668 aa).

The tract at residues 263–288 (RKGRNNSLTPAPDDPGSPYAIGSEEG) is disordered. Lysine 264, glutamine 324, and aspartate 359 together coordinate alpha-maltose 1-phosphate. Residue aspartate 395 is the Nucleophile of the active site. Residue asparagine 396 participates in alpha-maltose 1-phosphate binding. Glutamate 424 functions as the Proton donor in the catalytic mechanism. 535 to 536 (KY) contacts alpha-maltose 1-phosphate.

It belongs to the glycosyl hydrolase 13 family. GlgE subfamily. In terms of assembly, homodimer.

The enzyme catalyses alpha-maltose 1-phosphate + [(1-&gt;4)-alpha-D-glucosyl](n) = [(1-&gt;4)-alpha-D-glucosyl](n+2) + phosphate. Functionally, maltosyltransferase that uses maltose 1-phosphate (M1P) as the sugar donor to elongate linear or branched alpha-(1-&gt;4)-glucans. Is involved in a branched alpha-glucan biosynthetic pathway from trehalose, together with TreS, Mak and GlgB. This chain is Alpha-1,4-glucan:maltose-1-phosphate maltosyltransferase, found in Cereibacter sphaeroides (strain ATCC 17023 / DSM 158 / JCM 6121 / CCUG 31486 / LMG 2827 / NBRC 12203 / NCIMB 8253 / ATH 2.4.1.) (Rhodobacter sphaeroides).